Consider the following 590-residue polypeptide: MNAFLLQLAIYLAVLLVLARPLGTYMARVFGDAPSRAHWLRSVERLLYRVAGVDPRAEMGWKHYALAVIAVNVLGALAVYALQRLQPWLPLNPQGFGAVTPDSSFNTAVSFVTNTNWQGYSGESTMSYLTQMLGLAVQNFLSAATGIAVVIALIRGFARHSARTIGNFWVDFTRGTLYVLLPLSVIVAVFFVSQGAIQNFDAYKEVTTVAATTYDNPKTDAQGNPIKDAQGNPVTEKATTQKQTLPMGPIASQEAIKMLGTNGGGPFNANSAHPYENPTPLANFVQMLSIFLIPAALCFTFGAMVGDRRQGWAVLASMTILFVVLAVFEMWAELHANPMLAHLGVDQAVGNMEGKETRFGVVASSLFVTITTAASCGAVNAMHDSLTALGGFVPMFLIQLGEVVFGGVGSGLYGMLVYAILAVFIAGLMIGRTPEYLGKKIEVFEMKMTSIAILVTPLLVLVGTAVAVLASGGRAGIFNPGTHGFSEVLYAFSSAANNNGSAFAGLSANTPFYNVALGIVMWLGRFWIIVPVLAMAGTFAAKKRLPVTVGTLPTHGPLFVVLLIGSVLLVGALTYIPALALGPIAEHLAR.

The next 4 membrane-spanning stretches (helical) occupy residues 3–23 (AFLLQLAIYLAVLLVLARPLG), 63–83 (HYALAVIAVNVLGALAVYALQ), 134–154 (GLAVQNFLSAATGIAVVIALI), and 177–197 (LYVLLPLSVIVAVFFVSQGAI). The segment at 217-244 (PKTDAQGNPIKDAQGNPVTEKATTQKQT) is disordered. 8 helical membrane-spanning segments follow: residues 284 to 304 (FVQMLSIFLIPAALCFTFGAM), 312 to 332 (WAVLASMTILFVVLAVFEMWA), 359 to 379 (FGVVASSLFVTITTAASCGAV), 388 to 408 (ALGGFVPMFLIQLGEVVFGGV), 411 to 431 (GLYGMLVYAILAVFIAGLMIG), 450 to 470 (SIAILVTPLLVLVGTAVAVLA), 515 to 535 (VALGIVMWLGRFWIIVPVLAM), and 558 to 578 (LFVVLLIGSVLLVGALTYIPA).

Belongs to the KdpA family. As to quaternary structure, the system is composed of three essential subunits: KdpA, KdpB and KdpC.

Its subcellular location is the cell inner membrane. Functionally, part of the high-affinity ATP-driven potassium transport (or Kdp) system, which catalyzes the hydrolysis of ATP coupled with the electrogenic transport of potassium into the cytoplasm. This subunit binds the periplasmic potassium ions and delivers the ions to the membrane domain of KdpB through an intramembrane tunnel. This chain is Potassium-transporting ATPase potassium-binding subunit, found in Ralstonia nicotianae (strain ATCC BAA-1114 / GMI1000) (Ralstonia solanacearum).